Consider the following 663-residue polypeptide: Oligopeptide-binding protein SarA (663 aa).

A signal peptide spans 1-22 (MKKGKILALAGVALLATGVLAA). C23 carries N-palmitoyl cysteine lipidation. Residue C23 is the site of S-diacylglycerol cysteine attachment. Positions 637–663 (QKAQEKWNKERAESNKKAQEELEKHVK) are disordered.

The protein belongs to the bacterial solute-binding protein 5 family.

Its subcellular location is the cell membrane. Its function is as follows. May be involved in the expression of cell surface properties important for colonization of the human oral cavity. It may also be involved in uptake processes. The sequence is that of Oligopeptide-binding protein SarA (sarA) from Streptococcus gordonii (strain Challis / ATCC 35105 / BCRC 15272 / CH1 / DL1 / V288).